The following is a 465-amino-acid chain: GTPase Der (465 aa).

2 consecutive EngA-type G domains span residues phenylalanine 3–tyrosine 166 and isoleucine 184–asparagine 358. Residues glycine 9–serine 16, aspartate 56–isoleucine 60, asparagine 118–aspartate 121, glycine 190–serine 197, aspartate 237–valine 241, and asparagine 302–aspartate 305 each bind GTP. Residues lysine 359–glutamate 443 form the KH-like domain. A disordered region spans residues phenylalanine 446 to lysine 465.

This sequence belongs to the TRAFAC class TrmE-Era-EngA-EngB-Septin-like GTPase superfamily. EngA (Der) GTPase family. In terms of assembly, associates with the 50S ribosomal subunit.

Functionally, GTPase that plays an essential role in the late steps of ribosome biogenesis. This chain is GTPase Der, found in Francisella tularensis subsp. holarctica (strain FTNF002-00 / FTA).